A 427-amino-acid polypeptide reads, in one-letter code: UPF0229 protein YeaH (427 aa).

The segment covering 79-90 (NDHFVQNDRIER) has biased composition (basic and acidic residues). Positions 79–110 (NDHFVQNDRIERPQGGGGGSGSGQGQASQDGE) are disordered. Positions 92–102 (QGGGGGSGSGQ) are enriched in gly residues.

Belongs to the UPF0229 family.

This chain is UPF0229 protein YeaH, found in Escherichia coli O9:H4 (strain HS).